A 142-amino-acid chain; its full sequence is MKIINILFCLFLLMLNSCNSNDTNTSQTKSRQKRDLTQKEATQEKPKSKEDLLREKLSEDQKTHLDWLKTALTGAGEFDKFLGYDEDKIKGALNHIKSELDKCTGDNSEQQKSTFKEVVKGALGGGIDSFATSASSTCQAQQ.

Positions 1-17 (MKIINILFCLFLLMLNS) are cleaved as a signal peptide. Cys18 is lipidated: N-palmitoyl cysteine. Cys18 carries the S-diacylglycerol cysteine lipid modification. The disordered stretch occupies residues 22 to 54 (DTNTSQTKSRQKRDLTQKEATQEKPKSKEDLLR). Residues 33-54 (KRDLTQKEATQEKPKSKEDLLR) show a composition bias toward basic and acidic residues.

This sequence belongs to the Multicopy lipoprotein (Mlp) family.

It is found in the cell outer membrane. An outer membrane protein that may participate in pathogenesis. Some human Lyme disease patients have antibodies against this protein. The Mlp proteins probably undergo intragenic recombination, generating new alleles. The polypeptide is Lipoprotein MlpI (Borreliella burgdorferi (strain ATCC 35210 / DSM 4680 / CIP 102532 / B31) (Borrelia burgdorferi)).